Consider the following 458-residue polypeptide: Zinc finger protein 239 (458 aa).

Lys-108 participates in a covalent cross-link: Glycyl lysine isopeptide (Lys-Gly) (interchain with G-Cter in SUMO2). At Ser-191 the chain carries Phosphoserine. 9 consecutive C2H2-type zinc fingers follow at residues Tyr-207–His-229, Tyr-235–His-257, Tyr-263–His-285, Tyr-291–His-313, Tyr-319–His-341, Tyr-347–His-369, Tyr-375–His-397, Tyr-403–His-425, and Tyr-431–His-453.

This sequence belongs to the krueppel C2H2-type zinc-finger protein family.

Its subcellular location is the nucleus. May be involved in transcriptional regulation. This is Zinc finger protein 239 (ZNF239) from Homo sapiens (Human).